The chain runs to 142 residues: MPTPSMEDYIEKIYSLIETKGYARVSDIADELFVHPSSVTKMVQKLDKDEYLIYEKYRGLILTPKGTQMGKRLLERHALLESFLSIIGVDPSHIYHDVEGIEHHLSWNSIDRIGDVVQFFENHPDALKTLKAMETNKPETKE.

Positions 1–63 (MPTPSMEDYI…YEKYRGLILT (63 aa)) constitute an HTH dtxR-type domain. Aspartate 8, glutamate 11, histidine 77, glutamate 99, glutamate 102, and histidine 103 together coordinate Mn(2+).

The protein belongs to the DtxR/MntR family. Homodimer.

It is found in the cytoplasm. DNA binding is strongly activated by Mn(2+). In terms of biological role, central regulator of manganese homeostasis. This chain is HTH-type transcriptional regulator MntR, found in Listeria monocytogenes serotype 4b (strain CLIP80459).